A 162-amino-acid polypeptide reads, in one-letter code: Caveolin-2 (162 aa).

Residues 1–86 (MGLETEKADV…FEISKYVMYK (86 aa)) are Cytoplasmic-facing. Y19 is subject to Phosphotyrosine; by SRC. S20 and S23 each carry phosphoserine. Y27 bears the Phosphotyrosine; by SRC mark. S36 carries the phosphoserine modification. Positions 87–107 (FLTVFLAIPLAFIAGILFATL) form an intramembrane region, helical. The Cytoplasmic portion of the chain corresponds to 108 to 162 (SCLHIWILMPFVKTCLMVLPSVQTIWKSVTDVIIAPLCTSVGRSFSSVSLQLSQD).

The protein belongs to the caveolin family. In terms of assembly, monomer or homodimer. Interacts with CAV1; the interaction forms a stable heterooligomeric complex that is required for targeting to lipid rafts and for caveolae formation. Tyrosine phosphorylated forms do not form heterooligomers with the Tyr-19-phosphorylated form existing as a monomer or dimer, and the Tyr-27-form as a monomer only. Interacts (tyrosine phosphorylated form) with the SH2 domain-containing proteins, RASA1, NCK1 and SRC. Interacts (tyrosine phosphorylated form) with INSR, the interaction (Tyr-27-phosphorylated form) is increased on insulin stimulation. Interacts (Tyr-19 phosphorylated form) with MAPK1 (phosphorylated form); the interaction, promoted by insulin, leads to nuclear location and MAPK1 activation. Interacts with STAT3; the interaction is increased on insulin-induced tyrosine phosphorylation leading to STAT activation. In terms of processing, phosphorylated on serine and tyrosine residues. CAV1 promotes phosphorylation on Ser-23 which then targets the complex to the plasma membrane, lipid rafts and caveolae. Phosphorylation on Ser-36 appears to modulate mitosis in endothelial cells. Phosphorylation on both Tyr-19 and Tyr-27 is required for insulin-induced 'Ser-727' phosphorylation of STAT3 and its activation. Phosphorylation on Tyr-19 is required for insulin-induced phosphorylation of MAPK1 and DNA binding of STAT3. Tyrosine phosphorylation is induced by both EGF and insulin (By. similarity).

Its subcellular location is the nucleus. It localises to the cytoplasm. The protein localises to the golgi apparatus membrane. The protein resides in the cell membrane. It is found in the membrane. Its subcellular location is the caveola. May act as a scaffolding protein within caveolar membranes. Interacts directly with G-protein alpha subunits and can functionally regulate their activity. Acts as an accessory protein in conjunction with CAV1 in targeting to lipid rafts and driving caveolae formation. The Ser-36 phosphorylated form has a role in modulating mitosis in endothelial cells. Positive regulator of cellular mitogenesis of the MAPK signaling pathway. Required for the insulin-stimulated nuclear translocation and activation of MAPK1 and STAT3, and the subsequent regulation of cell cycle progression. This chain is Caveolin-2 (CAV2), found in Pongo abelii (Sumatran orangutan).